Consider the following 116-residue polypeptide: Large ribosomal subunit protein bL20c (116 aa).

It belongs to the bacterial ribosomal protein bL20 family.

The protein localises to the plastid. It is found in the chloroplast. In terms of biological role, binds directly to 23S ribosomal RNA and is necessary for the in vitro assembly process of the 50S ribosomal subunit. It is not involved in the protein synthesizing functions of that subunit. The polypeptide is Large ribosomal subunit protein bL20c (Rhodomonas salina (Cryptomonas salina)).